Consider the following 417-residue polypeptide: Gamma-glutamyl phosphate reductase (417 aa).

This sequence belongs to the gamma-glutamyl phosphate reductase family.

Its subcellular location is the cytoplasm. It catalyses the reaction L-glutamate 5-semialdehyde + phosphate + NADP(+) = L-glutamyl 5-phosphate + NADPH + H(+). It participates in amino-acid biosynthesis; L-proline biosynthesis; L-glutamate 5-semialdehyde from L-glutamate: step 2/2. In terms of biological role, catalyzes the NADPH-dependent reduction of L-glutamate 5-phosphate into L-glutamate 5-semialdehyde and phosphate. The product spontaneously undergoes cyclization to form 1-pyrroline-5-carboxylate. The protein is Gamma-glutamyl phosphate reductase of Proteus mirabilis (strain HI4320).